A 111-amino-acid polypeptide reads, in one-letter code: Large ribosomal subunit protein uL22 (111 aa).

The protein belongs to the universal ribosomal protein uL22 family. Part of the 50S ribosomal subunit.

This protein binds specifically to 23S rRNA; its binding is stimulated by other ribosomal proteins, e.g. L4, L17, and L20. It is important during the early stages of 50S assembly. It makes multiple contacts with different domains of the 23S rRNA in the assembled 50S subunit and ribosome. In terms of biological role, the globular domain of the protein is located near the polypeptide exit tunnel on the outside of the subunit, while an extended beta-hairpin is found that lines the wall of the exit tunnel in the center of the 70S ribosome. The polypeptide is Large ribosomal subunit protein uL22 (Clostridium novyi (strain NT)).